The primary structure comprises 813 residues: Calpain-7 (813 aa).

M1 carries the N-acetylmethionine modification. Residue T95 is modified to Phosphothreonine. The Calpain catalytic domain maps to R232 to P540. Residues C290, H458, and N478 contribute to the active site. The segment at G541–A701 is domain III. The interval G702–Q813 is domain N.

It belongs to the peptidase C2 family. As to expression, ubiquitous.

It is found in the nucleus. Functionally, calcium-regulated non-lysosomal thiol-protease. In Homo sapiens (Human), this protein is Calpain-7 (CAPN7).